Here is a 429-residue protein sequence, read N- to C-terminus: Enolase (429 aa).

Q163 contacts (2R)-2-phosphoglycerate. E205 (proton donor) is an active-site residue. Mg(2+) contacts are provided by D242, E286, and D313. (2R)-2-phosphoglycerate-binding residues include K338, R367, S368, and K389. The active-site Proton acceptor is K338.

The protein belongs to the enolase family. It depends on Mg(2+) as a cofactor.

Its subcellular location is the cytoplasm. It localises to the secreted. The protein resides in the cell surface. The catalysed reaction is (2R)-2-phosphoglycerate = phosphoenolpyruvate + H2O. The protein operates within carbohydrate degradation; glycolysis; pyruvate from D-glyceraldehyde 3-phosphate: step 4/5. Its function is as follows. Catalyzes the reversible conversion of 2-phosphoglycerate (2-PG) into phosphoenolpyruvate (PEP). It is essential for the degradation of carbohydrates via glycolysis. This chain is Enolase, found in Geotalea uraniireducens (strain Rf4) (Geobacter uraniireducens).